Consider the following 291-residue polypeptide: Lipoyl synthase (291 aa).

Residues Cys-35, Cys-40, Cys-46, Cys-61, Cys-65, Cys-68, and Ser-273 each contribute to the [4Fe-4S] cluster site. The 216-residue stretch at 47 to 262 (FGKRQATFLI…KEKALAMGFE (216 aa)) folds into the Radical SAM core domain.

The protein belongs to the radical SAM superfamily. Lipoyl synthase family. The cofactor is [4Fe-4S] cluster.

Its subcellular location is the cytoplasm. The catalysed reaction is [[Fe-S] cluster scaffold protein carrying a second [4Fe-4S](2+) cluster] + N(6)-octanoyl-L-lysyl-[protein] + 2 oxidized [2Fe-2S]-[ferredoxin] + 2 S-adenosyl-L-methionine + 4 H(+) = [[Fe-S] cluster scaffold protein] + N(6)-[(R)-dihydrolipoyl]-L-lysyl-[protein] + 4 Fe(3+) + 2 hydrogen sulfide + 2 5'-deoxyadenosine + 2 L-methionine + 2 reduced [2Fe-2S]-[ferredoxin]. It participates in protein modification; protein lipoylation via endogenous pathway; protein N(6)-(lipoyl)lysine from octanoyl-[acyl-carrier-protein]: step 2/2. Functionally, catalyzes the radical-mediated insertion of two sulfur atoms into the C-6 and C-8 positions of the octanoyl moiety bound to the lipoyl domains of lipoate-dependent enzymes, thereby converting the octanoylated domains into lipoylated derivatives. The polypeptide is Lipoyl synthase (Geobacter sp. (strain M21)).